The sequence spans 786 residues: m7GpppN-mRNA hydrolase dcap-2 (786 aa).

Residues 25-61 show a composition bias toward polar residues; the sequence is QKQNKSTEEPPSSVQKLLASLQQAQNKSDLSEQPSTS. The disordered stretch occupies residues 25–148; the sequence is QKQNKSTEEP…QQQQQYKGPR (124 aa). Over residues 62-72 the composition is skewed to basic residues; it reads KPKKNEKRKKA. 2 stretches are compositionally biased toward polar residues: residues 101–111 and 118–133; these read MQQQAENARIS and QVST…TAPE. The span at 134–144 shows a compositional bias: low complexity; sequence QQNYQQQQQQY. A Nudix hydrolase domain is found at 238–366; sequence STVPTYGAIL…LPAYLQGNKF (129 aa). The short motif at 273 to 294 is the Nudix box element; the sequence is GKINQAEPPRDAAIRETFEETG. Mg(2+)-binding residues include glutamate 288 and glutamate 292. Disordered stretches follow at residues 556–576 and 623–655; these read IMHS…TPTA and ISST…SSQV. 2 stretches are compositionally biased toward polar residues: residues 623–632 and 646–655; these read ISSTQKQSIP and SASLSGSSQV.

The protein belongs to the Nudix hydrolase family. DCP2 subfamily. In terms of assembly, may be a component of the decapping complex composed of dcap-1 and dcap-2. Mg(2+) serves as cofactor. It depends on Mn(2+) as a cofactor. Expressed in sensory neurons.

It localises to the cytoplasmic granule. The protein resides in the cytoplasm. Its subcellular location is the perinuclear region. It catalyses the reaction a 5'-end (N(7)-methyl 5'-triphosphoguanosine)-ribonucleoside in mRNA + H2O = N(7)-methyl-GDP + a 5'-end phospho-ribonucleoside in mRNA + 2 H(+). It carries out the reaction a 5'-end (N(2),N(2),N(7)-trimethyl 5'-triphosphoguanosine)-ribonucleoside in mRNA + H2O = N(2),N(2),N(7)-trimethyl-GDP + a 5'-end phospho-ribonucleoside in mRNA + 2 H(+). With respect to regulation, inhibited by capped and uncapped RNA. Not inhibited by dinucleotide cap or methylated nucleotide analogs. In terms of biological role, decapping metalloenzyme that catalyzes the cleavage of the cap structure on mRNAs. Removes the 7-methyl guanine cap structure from mRNA molecules, yielding a 5'-phosphorylated mRNA fragment and 7m-GDP. RNA-decapping enzyme although it does not bind the RNA cap. May contribute to gene regulation in multiple RNA pathways including monomethylguanosine- and trimethylguanosine-capped RNAs. In oocytes, may play a role in the response to stress induced by heat shock, osmotic stress and anoxia. Required for the developmental axon guidance and regrowth of PLM touch receptor neurons. Early in embryogenesis, plays a role in ciliary shape formation in sensory neurons. Promotes survival at high temperatures. This chain is m7GpppN-mRNA hydrolase dcap-2, found in Caenorhabditis elegans.